The chain runs to 655 residues: uncharacterized protein (655 aa).

In terms of domain architecture, PE-PPE spans 245–469 (PGVIAQALFT…NLKVIVNLGY (225 aa)).

The protein belongs to the mycobacterial PPE family.

This is an uncharacterized protein from Mycobacterium tuberculosis (strain ATCC 25618 / H37Rv).